The sequence spans 300 residues: N-carbamoylputrescine amidase (300 aa).

In terms of domain architecture, CN hydrolase spans 8–266; it reads VTVAALQFAC…EAVLVAQFDL (259 aa). Glu47 (proton acceptor) is an active-site residue. Lys120 acts as the Proton donor in catalysis. The active-site Nucleophile is Cys157.

It belongs to the carbon-nitrogen hydrolase superfamily. In terms of assembly, homooctamer.

The catalysed reaction is N-carbamoylputrescine + H2O + 2 H(+) = putrescine + NH4(+) + CO2. It participates in amine and polyamine biosynthesis; putrescine biosynthesis via agmatine pathway; putrescine from N-carbamoylputrescine (amidase route): step 1/1. Its function is as follows. Involved in polyamine biosynthesis. The chain is N-carbamoylputrescine amidase (CPA) from Solanum tuberosum (Potato).